The following is a 120-amino-acid chain: Peptidyl-tRNA hydrolase (120 aa).

This sequence belongs to the PTH2 family.

Its subcellular location is the cytoplasm. It catalyses the reaction an N-acyl-L-alpha-aminoacyl-tRNA + H2O = an N-acyl-L-amino acid + a tRNA + H(+). Functionally, the natural substrate for this enzyme may be peptidyl-tRNAs which drop off the ribosome during protein synthesis. This Pyrobaculum aerophilum (strain ATCC 51768 / DSM 7523 / JCM 9630 / CIP 104966 / NBRC 100827 / IM2) protein is Peptidyl-tRNA hydrolase.